Consider the following 623-residue polypeptide: Chaperone protein DnaK (623 aa).

Residue Thr175 is modified to Phosphothreonine; by autocatalysis. The segment at 580-623 (PEGAQGAGFDPNNMGGANAGNASAGNDKKDDNVVDADFKVEDDK) is disordered. The span at 591–604 (NNMGGANAGNASAG) shows a compositional bias: low complexity. Positions 605 to 623 (NDKKDDNVVDADFKVEDDK) are enriched in basic and acidic residues.

This sequence belongs to the heat shock protein 70 family.

Acts as a chaperone. The protein is Chaperone protein DnaK of Clostridium botulinum (strain Hall / ATCC 3502 / NCTC 13319 / Type A).